The primary structure comprises 30 residues: MDPAGPDNDERFTYDYYRLRVVGLIVAAVL.

Belongs to the FXYD family. Post-translationally, phosphorylated by protein kinase a (PK-A) and protein kinase C (PK-C). Phosphorylated in response to insulin and adrenergic stimulation.

The protein resides in the microsome membrane. It localises to the endoplasmic reticulum membrane. Functionally, induces a hyperpolarization-activated chloride current when expressed in Xenopus oocytes. May have a functional role in muscle contraction. The chain is Phospholemman-like protein from Squalus acanthias (Spiny dogfish).